Reading from the N-terminus, the 172-residue chain is 3-hydroxydecanoyl-[acyl-carrier-protein] dehydratase (172 aa).

Residue His71 is part of the active site.

It belongs to the thioester dehydratase family. FabA subfamily. Homodimer.

The protein localises to the cytoplasm. It catalyses the reaction a (3R)-hydroxyacyl-[ACP] = a (2E)-enoyl-[ACP] + H2O. It carries out the reaction (3R)-hydroxydecanoyl-[ACP] = (2E)-decenoyl-[ACP] + H2O. The enzyme catalyses (2E)-decenoyl-[ACP] = (3Z)-decenoyl-[ACP]. It participates in lipid metabolism; fatty acid biosynthesis. Necessary for the introduction of cis unsaturation into fatty acids. Catalyzes the dehydration of (3R)-3-hydroxydecanoyl-ACP to E-(2)-decenoyl-ACP and then its isomerization to Z-(3)-decenoyl-ACP. Can catalyze the dehydratase reaction for beta-hydroxyacyl-ACPs with saturated chain lengths up to 16:0, being most active on intermediate chain length. This Proteus mirabilis (strain HI4320) protein is 3-hydroxydecanoyl-[acyl-carrier-protein] dehydratase.